The following is a 370-amino-acid chain: Cytochrome b (370 aa).

Helical transmembrane passes span 30–50, 74–96, 109–129, and 175–195; these read FGSMLGMVLIFQILTGTFLAF, WVFRIFHFNGASLFFIFLYLHIF, VWMSGLTIYLLVMMEAFMGYV, and FFVLHFLLPWAILVIVLGHLI. Histidine 80 and histidine 94 together coordinate heme b. Heme b-binding residues include histidine 179 and histidine 193. Histidine 198 serves as a coordination point for a ubiquinone. Helical transmembrane passes span 221 to 240, 284 to 304, 316 to 336, and 342 to 362; these read YLGKDAYNIVIWLLFIVLSL, VLGVIALLMSIVTFYFFALVN, FLVFMFIISSTILSWLGQCTV, and ILSPLFSFIYFGLAYLMLFIF.

This sequence belongs to the cytochrome b family. As to quaternary structure, the main subunits of complex b-c1 are: cytochrome b, cytochrome c1 and the Rieske protein. Requires heme b as cofactor.

It localises to the mitochondrion inner membrane. In terms of biological role, component of the ubiquinol-cytochrome c reductase complex (complex III or cytochrome b-c1 complex) that is part of the mitochondrial respiratory chain. The b-c1 complex mediates electron transfer from ubiquinol to cytochrome c. Contributes to the generation of a proton gradient across the mitochondrial membrane that is then used for ATP synthesis. This Caenorhabditis elegans protein is Cytochrome b.